A 451-amino-acid chain; its full sequence is Phosphoglucosamine mutase (451 aa).

Serine 101 acts as the Phosphoserine intermediate in catalysis. Serine 101, aspartate 240, aspartate 242, and aspartate 244 together coordinate Mg(2+). Residue serine 101 is modified to Phosphoserine.

It belongs to the phosphohexose mutase family. The cofactor is Mg(2+). In terms of processing, activated by phosphorylation.

The catalysed reaction is alpha-D-glucosamine 1-phosphate = D-glucosamine 6-phosphate. Functionally, catalyzes the conversion of glucosamine-6-phosphate to glucosamine-1-phosphate. The sequence is that of Phosphoglucosamine mutase from Streptococcus pyogenes serotype M18 (strain MGAS8232).